Consider the following 76-residue polypeptide: Adropin (76 aa).

The signal sequence occupies residues 1–33; that stretch reads MGAALSQGALIAIICNGLVGFLLLLLWVILCWA. Residues 41–76 are disordered; that stretch reads IDSLSESSPNSSPGPCPEKAPPPQKPSHEGSYLLQP. The span at 52–65 shows a compositional bias: pro residues; that stretch reads SPGPCPEKAPPPQK.

It localises to the secreted. Functionally, involved in the regulation of glucose homeostasis and lipid metabolism. This chain is Adropin (ENHO), found in Bos taurus (Bovine).